The chain runs to 413 residues: Serine/threonine transporter SstT (413 aa).

A run of 9 helical transmembrane segments spans residues 14–34, 44–64, 82–102, 141–161, 178–198, 217–237, 290–310, 330–350, and 356–376; these read GSLV…ASFS, LGTL…FILV, IVLL…VVSF, ALAS…GVAL, GVTF…FGLV, LMVL…LIVF, IPLG…VLTL, LVAA…LLLI, and LFGI…IIGV.

This sequence belongs to the dicarboxylate/amino acid:cation symporter (DAACS) (TC 2.A.23) family.

It is found in the cell inner membrane. The catalysed reaction is L-serine(in) + Na(+)(in) = L-serine(out) + Na(+)(out). It carries out the reaction L-threonine(in) + Na(+)(in) = L-threonine(out) + Na(+)(out). In terms of biological role, involved in the import of serine and threonine into the cell, with the concomitant import of sodium (symport system). This Edwardsiella ictaluri (strain 93-146) protein is Serine/threonine transporter SstT.